A 176-amino-acid polypeptide reads, in one-letter code: Inorganic pyrophosphatase (176 aa).

Residues Lys30, Arg44, and Tyr56 each contribute to the substrate site. The Mg(2+) site is built by Asp66, Asp71, and Asp103. Residue Tyr142 coordinates substrate.

It belongs to the PPase family. In terms of assembly, homohexamer. The cofactor is Mg(2+).

It is found in the cytoplasm. The catalysed reaction is diphosphate + H2O = 2 phosphate + H(+). Functionally, catalyzes the hydrolysis of inorganic pyrophosphate (PPi) forming two phosphate ions. In Salmonella typhi, this protein is Inorganic pyrophosphatase.